Consider the following 580-residue polypeptide: Putative ankyrin repeat protein L63 (580 aa).

ANK repeat units lie at residues 81–110 (SLNR…DFRI), 111–140 (DNDY…NIGA), 141–170 (NDNC…DINA), 172–200 (NNYP…DIRA), 202–230 (DDYV…VLNK), 314–339 (SLDD…LLGA), 340–369 (SERK…NIKC), 370–399 (GSNC…DINS), 400–429 (GNNY…NIRA), 431–459 (NDRA…NIRA), 461–489 (DDRA…DIKA), 490–519 (GDDY…NIKA), 521–549 (DDYA…DIRA), and 551–579 (NNYA…VINP).

The polypeptide is Putative ankyrin repeat protein L63 (Acanthamoeba polyphaga (Amoeba)).